We begin with the raw amino-acid sequence, 366 residues long: Chorismate synthase (366 aa).

Positions 48 and 54 each coordinate NADP(+). Residues 125-127 (RSS), 238-239 (NA), glycine 278, 293-297 (KPTSS), and arginine 319 each bind FMN.

Belongs to the chorismate synthase family. Homotetramer. It depends on FMNH2 as a cofactor.

The catalysed reaction is 5-O-(1-carboxyvinyl)-3-phosphoshikimate = chorismate + phosphate. Its pathway is metabolic intermediate biosynthesis; chorismate biosynthesis; chorismate from D-erythrose 4-phosphate and phosphoenolpyruvate: step 7/7. In terms of biological role, catalyzes the anti-1,4-elimination of the C-3 phosphate and the C-6 proR hydrogen from 5-enolpyruvylshikimate-3-phosphate (EPSP) to yield chorismate, which is the branch point compound that serves as the starting substrate for the three terminal pathways of aromatic amino acid biosynthesis. This reaction introduces a second double bond into the aromatic ring system. The protein is Chorismate synthase of Laribacter hongkongensis (strain HLHK9).